We begin with the raw amino-acid sequence, 340 residues long: GTP 3',8-cyclase (340 aa).

The Radical SAM core domain maps to 20–246; it reads RFERQYVYLR…PKALSDGPAK (227 aa). GTP is bound at residue Arg-29. 2 residues coordinate [4Fe-4S] cluster: Cys-36 and Cys-40. Tyr-42 is a binding site for S-adenosyl-L-methionine. Cys-43 serves as a coordination point for [4Fe-4S] cluster. Arg-79 contributes to the GTP binding site. An S-adenosyl-L-methionine-binding site is contributed by Gly-83. Thr-110 contacts GTP. An S-adenosyl-L-methionine-binding site is contributed by Ser-134. Lys-171 provides a ligand contact to GTP. Met-205 provides a ligand contact to S-adenosyl-L-methionine. The [4Fe-4S] cluster site is built by Cys-268 and Cys-271. Position 273–275 (273–275) interacts with GTP; the sequence is RLR. Cys-285 provides a ligand contact to [4Fe-4S] cluster.

Belongs to the radical SAM superfamily. MoaA family. In terms of assembly, monomer and homodimer. Requires [4Fe-4S] cluster as cofactor.

The catalysed reaction is GTP + AH2 + S-adenosyl-L-methionine = (8S)-3',8-cyclo-7,8-dihydroguanosine 5'-triphosphate + 5'-deoxyadenosine + L-methionine + A + H(+). It participates in cofactor biosynthesis; molybdopterin biosynthesis. Functionally, catalyzes the cyclization of GTP to (8S)-3',8-cyclo-7,8-dihydroguanosine 5'-triphosphate. The sequence is that of GTP 3',8-cyclase from Actinobacillus pleuropneumoniae serotype 5b (strain L20).